Here is a 643-residue protein sequence, read N- to C-terminus: 1-deoxy-D-xylulose-5-phosphate synthase (643 aa).

Thiamine diphosphate is bound by residues H79 and 120 to 122 (AHA). Residue D151 participates in Mg(2+) binding. Thiamine diphosphate contacts are provided by residues 152–153 (GS), N180, Y287, and E369. Position 180 (N180) interacts with Mg(2+).

Belongs to the transketolase family. DXPS subfamily. Homodimer. Mg(2+) serves as cofactor. It depends on thiamine diphosphate as a cofactor.

The catalysed reaction is D-glyceraldehyde 3-phosphate + pyruvate + H(+) = 1-deoxy-D-xylulose 5-phosphate + CO2. The protein operates within metabolic intermediate biosynthesis; 1-deoxy-D-xylulose 5-phosphate biosynthesis; 1-deoxy-D-xylulose 5-phosphate from D-glyceraldehyde 3-phosphate and pyruvate: step 1/1. Functionally, catalyzes the acyloin condensation reaction between C atoms 2 and 3 of pyruvate and glyceraldehyde 3-phosphate to yield 1-deoxy-D-xylulose-5-phosphate (DXP). This is 1-deoxy-D-xylulose-5-phosphate synthase from Maricaulis maris (strain MCS10) (Caulobacter maris).